Here is a 194-residue protein sequence, read N- to C-terminus: Thymidylate kinase (194 aa).

Residue 7 to 14 participates in ATP binding; that stretch reads GVDGVGKS.

This sequence belongs to the thymidylate kinase family.

The catalysed reaction is dTMP + ATP = dTDP + ADP. Functionally, phosphorylation of dTMP to form dTDP in both de novo and salvage pathways of dTTP synthesis. The protein is Thymidylate kinase of Campylobacter curvus (strain 525.92).